The following is a 252-amino-acid chain: Aliphatic sulfonates import ATP-binding protein SsuB 1 (252 aa).

The ABC transporter domain maps to 6-234 (LQLHIAGKRF…PRDRQAHEAA (229 aa)). ATP is bound at residue 38-45 (GASGCGKS).

The protein belongs to the ABC transporter superfamily. Aliphatic sulfonates importer (TC 3.A.1.17.2) family. The complex is composed of two ATP-binding proteins (SsuB), two transmembrane proteins (SsuC) and a solute-binding protein (SsuA).

The protein localises to the cell inner membrane. The catalysed reaction is ATP + H2O + aliphatic sulfonate-[sulfonate-binding protein]Side 1 = ADP + phosphate + aliphatic sulfonateSide 2 + [sulfonate-binding protein]Side 1.. Functionally, part of the ABC transporter complex SsuABC involved in aliphatic sulfonates import. Responsible for energy coupling to the transport system. This chain is Aliphatic sulfonates import ATP-binding protein SsuB 1, found in Xanthomonas axonopodis pv. citri (strain 306).